A 755-amino-acid polypeptide reads, in one-letter code: MTVSILLDSLKDDGQRLSECRHESPFSILGPQPFKDKWIIRIWMPEASQVELVTQQTKIKLQNPNHEWIFEGVLEKDPGTDYQIKVNRGGIEHVQHDPWSFRKEWMGEIDRHLFAEGNHHHIWRKMGAHLTEIDKKKGVMFCLWAPHAKSVSVIGDLNSWDGRHHPMQKRLGGIWELFIPGLSEGDLYKYEIRTEKGHCYEKADPYGFQHEVRPAKSSVISKIDSFQWSDQSWISNRDNRDPLEQPISVYEMHLGSWMHASSDDPFINSNGEHRAPVPAADMKPGSRLLTYKELANKVIPYVKERGFTHIELMPISEHPFDGSWGYQVTGWYAPTSRFGSPDEFRAFVDSCHKEGIGIILDWVPGHFPKDQHGLAYFDGSHLYEHSDPRVGEHKEWGTLIFNYSRNEVRNFLVANLIFWFDQFHIDGIRVDAVASMLYKDYLRPEGEWIPNEDGGNENFEAVRFLQQANHVLFQHFPGALSIAEESTTWTGVTKPTDMDGLGFNLKWNMGWMHDMLDYFEIDPWFRQFNQNNITFSICYNFTENFMLALSHDEVVHGKSHLLHKMPGDDWQKYANTRALLAYMWTHPGKKTIFMGMEFGQRQEWNVWDDLQWDLLNYEPHKGIQKLVDDLNNLYKREPALWRNDFDEYGFQWIDCDDNKNSVISFMRREKTDGEWLVIVANFTPQNHSNYRIGVPVDGFYEEIFNTDASQYGGSNLGNMGGKSTDLYNIHGYENSIDLCLPPLSVLVLKHKSKKN.

Asp431 functions as the Nucleophile in the catalytic mechanism. Glu484 serves as the catalytic Proton donor.

Belongs to the glycosyl hydrolase 13 family. GlgB subfamily. In terms of assembly, monomer.

The catalysed reaction is Transfers a segment of a (1-&gt;4)-alpha-D-glucan chain to a primary hydroxy group in a similar glucan chain.. It functions in the pathway glycan biosynthesis; glycogen biosynthesis. In terms of biological role, catalyzes the formation of the alpha-1,6-glucosidic linkages in glycogen by scission of a 1,4-alpha-linked oligosaccharide from growing alpha-1,4-glucan chains and the subsequent attachment of the oligosaccharide to the alpha-1,6 position. This is 1,4-alpha-glucan branching enzyme GlgB from Prochlorococcus marinus (strain NATL2A).